Reading from the N-terminus, the 352-residue chain is Peptide chain release factor 1 (352 aa).

The residue at position 233 (Gln233) is an N5-methylglutamine. Residues 288–309 (NAKDRKEQVGSGDRSERIRTYN) form a disordered region. A compositionally biased stretch (basic and acidic residues) spans 289–306 (AKDRKEQVGSGDRSERIR).

The protein belongs to the prokaryotic/mitochondrial release factor family. Methylated by PrmC. Methylation increases the termination efficiency of RF1.

The protein localises to the cytoplasm. Its function is as follows. Peptide chain release factor 1 directs the termination of translation in response to the peptide chain termination codons UAG and UAA. In Helicobacter pylori (strain J99 / ATCC 700824) (Campylobacter pylori J99), this protein is Peptide chain release factor 1 (prfA).